Reading from the N-terminus, the 210-residue chain is Replication protein RepB (210 aa).

It belongs to the Gram-positive plasmids replication protein type 2 family.

Is essential for plasmid replication. Nicks the positive strand at the plus origin of replication. The sequence is that of Replication protein RepB (repB) from Streptococcus agalactiae.